Consider the following 298-residue polypeptide: UDP-N-acetylenolpyruvoylglucosamine reductase (298 aa).

One can recognise an FAD-binding PCMH-type domain in the interval 27 to 191 (TGGEADVFVM…LDATFSLALE (165 aa)). Residue arginine 170 is part of the active site. Serine 220 acts as the Proton donor in catalysis. Residue glutamate 290 is part of the active site.

It belongs to the MurB family. It depends on FAD as a cofactor.

The protein resides in the cytoplasm. The enzyme catalyses UDP-N-acetyl-alpha-D-muramate + NADP(+) = UDP-N-acetyl-3-O-(1-carboxyvinyl)-alpha-D-glucosamine + NADPH + H(+). It functions in the pathway cell wall biogenesis; peptidoglycan biosynthesis. Its function is as follows. Cell wall formation. The polypeptide is UDP-N-acetylenolpyruvoylglucosamine reductase (Listeria monocytogenes serotype 4a (strain HCC23)).